The sequence spans 277 residues: Large ribosomal subunit protein uL2 (277 aa).

Residues 222–277 (GVAMNPIDHPHGGGEGRTSGGRHPVTPWGKPTKGKKTRTNKSTDKFILLSRHKRKK) form a disordered region.

It belongs to the universal ribosomal protein uL2 family. Part of the 50S ribosomal subunit. Forms a bridge to the 30S subunit in the 70S ribosome.

Functionally, one of the primary rRNA binding proteins. Required for association of the 30S and 50S subunits to form the 70S ribosome, for tRNA binding and peptide bond formation. It has been suggested to have peptidyltransferase activity; this is somewhat controversial. Makes several contacts with the 16S rRNA in the 70S ribosome. In Bradyrhizobium sp. (strain ORS 278), this protein is Large ribosomal subunit protein uL2.